The chain runs to 496 residues: MEEQREALRKIITTLAMKNEEIQSFIYSLKQMLLNVEANSTKVQEDLEAEFQSLFSVLEELKEGMLMKIKQDRASRTYELQNQLAACTRALESSEELLETANQTLQAMDREDFPQAAKQIKDGVTMAPAFRLSLKAKVSDNMSHLMVDFAQERQMLQALKFLPVPSAPVIDLAESLVADNCVTLVWRMPDEDSKIDHYVLEYRRTNFEGPPRLKEDQPWMVIEGIRQTEYTLTGLKFDMKYMNFRVKACNKAVAGEFSEPVTLETPAFMFRLDASTSHQNLRVDDLSVEWDAMGGKVQDIKAREKDGKGRTASPINSPARGTPSPKRMPSGRGGRDRFTAESYTVLGDTLIDGGEHYWEVRYEPDSKAFGVGVAYRSLGRFEQLGKTAASWCLHVNNWLQVSFTAKHANKVKVLDAPVPDCLGVHCDFHQGLLSFYNARTKQVLHTFKTRFTQPLLPAFTVWCGSFQVTTGLQVPSSVRCLQKRGSATSSSNTSLT.

Residues 4–99 (QREALRKIIT…ALESSEELLE (96 aa)) are a coiled coil. The COS domain maps to 105–162 (LQAMDREDFPQAAKQIKDGVTMAPAFRLSLKAKVSDNMSHLMVDFAQERQMLQALKFL). Positions 164 to 268 (VPSAPVIDLA…EPVTLETPAF (105 aa)) constitute a Fibronectin type-III domain. A B30.2/SPRY domain is found at 268–477 (FMFRLDASTS…VTTGLQVPSS (210 aa)). The disordered stretch occupies residues 301 to 336 (KAREKDGKGRTASPINSPARGTPSPKRMPSGRGGRD). Residues Arg310 and Arg320 each carry the omega-N-methylarginine modification.

In terms of assembly, oligomerization is required for binding to microtubules.

The protein localises to the cytoplasm. It is found in the cytoskeleton. It localises to the microtubule organizing center. The protein resides in the centrosome. Its subcellular location is the nucleus. The protein localises to the cleavage furrow. May be involved in microtubule organization and stabilization. This Macaca fascicularis (Crab-eating macaque) protein is Fibronectin type III and SPRY domain-containing protein 1 (FSD1).